The chain runs to 612 residues: Threonine--tRNA ligase (612 aa).

The segment at 218 to 509 is catalytic; it reads NHRKLGVELG…LSEHFGGNFP (292 aa). Residues Cys310, His361, and His486 each contribute to the Zn(2+) site.

This sequence belongs to the class-II aminoacyl-tRNA synthetase family. Homodimer. Zn(2+) is required as a cofactor.

It localises to the cytoplasm. The catalysed reaction is tRNA(Thr) + L-threonine + ATP = L-threonyl-tRNA(Thr) + AMP + diphosphate + H(+). Functionally, catalyzes the attachment of threonine to tRNA(Thr) in a two-step reaction: L-threonine is first activated by ATP to form Thr-AMP and then transferred to the acceptor end of tRNA(Thr). Also edits incorrectly charged L-seryl-tRNA(Thr). The chain is Threonine--tRNA ligase from Helicobacter pylori (strain Shi470).